Here is a 614-residue protein sequence, read N- to C-terminus: Zinc finger protein ztf-7 (614 aa).

A compositionally biased stretch (gly residues) spans 1–10 (MSTSGSGGGN). Residues 1–160 (MSTSGSGGGN…SRPKKPEKMS (160 aa)) are disordered. A compositionally biased stretch (polar residues) spans 18–41 (NVASSPNANPKKNADTESSGGSKN). Positions 54–69 (GSNSRNGSRTNSVSNS) are enriched in low complexity. Residues 74 to 83 (NRKDWTDRKS) are compositionally biased toward basic and acidic residues. Residues 132–150 (DYSDEYELDEPFSDSDDED) are compositionally biased toward acidic residues. 2 consecutive C2H2-type zinc fingers follow at residues 356–380 (NECI…KRNH) and 447–470 (VVCL…KTTH).

Belongs to the ZNF277 family. In terms of assembly, interacts with rps-2.

Its subcellular location is the cytoplasm. Its function is as follows. Probable transcription factor. Limits the ability to tolerate cold environment or cold-warm stress. In complex with rps-2, mediates the cold-warm shock response by promoting translocation of components of the RNA exosome from the nucleolus to nucleoplasm. This is Zinc finger protein ztf-7 from Caenorhabditis elegans.